Here is a 286-residue protein sequence, read N- to C-terminus: Probable aquaporin PIP-type pTOM75 (286 aa).

The interval 1–35 (MAENKEEDVKLGANKFRETQPLGTAAQTDKDYKEP) is disordered. Residues 1–55 (MAENKEEDVKLGANKFRETQPLGTAAQTDKDYKEPPPAPLFEPGELSSWSFYRAG) lie on the Cytoplasmic side of the membrane. Over residues 7-18 (EDVKLGANKFRE) the composition is skewed to basic and acidic residues. A helical transmembrane segment spans residues 56 to 76 (IAEFMATFLFLYITILTVMGL). At 77 to 89 (KRSDSLCSSVGIQ) the chain is on the extracellular side. Residues 90–110 (GVAWAFGGMIFALVYCTAGIS) form a helical membrane-spanning segment. The Cytoplasmic portion of the chain corresponds to 111 to 133 (GGHINPAVTFGLFLARKLSLTRA). An NPA 1 motif is present at residues 115 to 117 (NPA). A helical transmembrane segment spans residues 134-154 (VFYMVMQCLGAICGAGVVKGF). Over 155-175 (MVGPYQRLGGGANVVNPGYTK) the chain is Extracellular. Residues 176 to 196 (GDGLGAEIIGTFVLVYTVFSA) form a helical membrane-spanning segment. The Cytoplasmic segment spans residues 197–209 (TDAKRNARDSHVP). The helical transmembrane segment at 210–230 (ILAPLPIGFAVFLVHLATIPI) threads the bilayer. Residues 231–257 (TGTGINPARSLGAAIIYNDEHAWNDHW) lie on the Extracellular side of the membrane. Positions 236–238 (NPA) match the NPA 2 motif. The helical transmembrane segment at 258–278 (IFWVGPMIGAALAAIYHQIII) threads the bilayer. Residues 279–286 (RAMPFHRS) are Cytoplasmic-facing.

It belongs to the MIP/aquaporin (TC 1.A.8) family. PIP (TC 1.A.8.11) subfamily. In terms of tissue distribution, roots, ripening fruit and senescing leaves.

The protein resides in the cell membrane. Its function is as follows. Aquaporins facilitate the transport of water and small neutral solutes across cell membranes. The polypeptide is Probable aquaporin PIP-type pTOM75 (Solanum lycopersicum (Tomato)).